The sequence spans 291 residues: ATP synthase gamma chain (291 aa).

This sequence belongs to the ATPase gamma chain family. F-type ATPases have 2 components, CF(1) - the catalytic core - and CF(0) - the membrane proton channel. CF(1) has five subunits: alpha(3), beta(3), gamma(1), delta(1), epsilon(1). CF(0) has three main subunits: a, b and c.

Its subcellular location is the cell membrane. Functionally, produces ATP from ADP in the presence of a proton gradient across the membrane. The gamma chain is believed to be important in regulating ATPase activity and the flow of protons through the CF(0) complex. The protein is ATP synthase gamma chain of Buchnera aphidicola subsp. Baizongia pistaciae (strain Bp).